A 498-amino-acid polypeptide reads, in one-letter code: ATP synthase subunit beta, chloroplastic (498 aa).

ATP is bound at residue 172–179; the sequence is GGAGVGKT.

Belongs to the ATPase alpha/beta chains family. F-type ATPases have 2 components, CF(1) - the catalytic core - and CF(0) - the membrane proton channel. CF(1) has five subunits: alpha(3), beta(3), gamma(1), delta(1), epsilon(1). CF(0) has four main subunits: a(1), b(1), b'(1) and c(9-12).

It is found in the plastid. The protein localises to the chloroplast thylakoid membrane. It carries out the reaction ATP + H2O + 4 H(+)(in) = ADP + phosphate + 5 H(+)(out). In terms of biological role, produces ATP from ADP in the presence of a proton gradient across the membrane. The catalytic sites are hosted primarily by the beta subunits. The chain is ATP synthase subunit beta, chloroplastic from Phoenix dactylifera (Date palm).